The chain runs to 498 residues: Cytochrome P450 monooxygenase 71 (498 aa).

A helical membrane pass occupies residues 7–24 (YVFALLGILATLYFVRWS). Asn-425 is a glycosylation site (N-linked (GlcNAc...) asparagine). Cys-440 is a binding site for heme.

The protein belongs to the cytochrome P450 family. Requires heme as cofactor.

The protein localises to the membrane. Its pathway is secondary metabolite biosynthesis. Its function is as follows. Cytochrome P450 monooxygenase that is able to use dehydroabietic acid and testosterone as substrates for oxidation, suggesting that the natural substrate(s) may be structurally related to steroid compounds. In Postia placenta (strain ATCC 44394 / Madison 698-R) (Brown rot fungus), this protein is Cytochrome P450 monooxygenase 71.